A 930-amino-acid polypeptide reads, in one-letter code: Isoleucine--tRNA ligase (930 aa).

A 'HIGH' region motif is present at residues 57 to 67; it reads PYANGNIHVGH. E554 lines the L-isoleucyl-5'-AMP pocket. The 'KMSKS' region signature appears at 595–599; it reads KMSKS. An ATP-binding site is contributed by K598. The Zn(2+) site is built by C888, C891, C908, and C911.

This sequence belongs to the class-I aminoacyl-tRNA synthetase family. IleS type 1 subfamily. In terms of assembly, monomer. It depends on Zn(2+) as a cofactor.

The protein resides in the cytoplasm. The catalysed reaction is tRNA(Ile) + L-isoleucine + ATP = L-isoleucyl-tRNA(Ile) + AMP + diphosphate. Functionally, catalyzes the attachment of isoleucine to tRNA(Ile). As IleRS can inadvertently accommodate and process structurally similar amino acids such as valine, to avoid such errors it has two additional distinct tRNA(Ile)-dependent editing activities. One activity is designated as 'pretransfer' editing and involves the hydrolysis of activated Val-AMP. The other activity is designated 'posttransfer' editing and involves deacylation of mischarged Val-tRNA(Ile). The chain is Isoleucine--tRNA ligase from Streptococcus pneumoniae serotype 19F (strain G54).